The chain runs to 318 residues: Probable arabinan endo-1,5-alpha-L-arabinosidase C (318 aa).

Residues 1-28 (MLSFVLLLCVALVNAYSDPGACSGTCWA) form the signal peptide. The Proton acceptor role is filled by aspartate 30. Asparagine 72, asparagine 80, and asparagine 188 each carry an N-linked (GlcNAc...) asparagine glycan. Residue glutamate 196 is the Proton donor of the active site. Asparagine 277 carries N-linked (GlcNAc...) asparagine glycosylation.

This sequence belongs to the glycosyl hydrolase 43 family.

The protein localises to the secreted. It carries out the reaction Endohydrolysis of (1-&gt;5)-alpha-arabinofuranosidic linkages in (1-&gt;5)-arabinans.. The protein operates within glycan metabolism; L-arabinan degradation. Its function is as follows. Endo-1,5-alpha-L-arabinanase involved in degradation of pectin. Its preferred substrate is linear 1,5-alpha-L-arabinan. The chain is Probable arabinan endo-1,5-alpha-L-arabinosidase C (abnC) from Aspergillus niger (strain ATCC MYA-4892 / CBS 513.88 / FGSC A1513).